The chain runs to 341 residues: Heme A synthase (341 aa).

8 helical membrane passes run 8–28, 92–112, 126–146, 160–180, 201–221, 256–276, 294–314, and 315–335; these read VIIW…VGGI, FHRF…VYFL, IVLL…VRSG, LHLT…LDLI, AALL…AGLI, VQFV…FLFF, LVVF…YSVP, and LALG…MTYT. H260 contacts heme. H321 is a binding site for heme.

It belongs to the COX15/CtaA family. Type 2 subfamily. As to quaternary structure, interacts with CtaB. Heme b is required as a cofactor.

The protein localises to the cell membrane. The enzyme catalyses Fe(II)-heme o + 2 A + H2O = Fe(II)-heme a + 2 AH2. Its pathway is porphyrin-containing compound metabolism; heme A biosynthesis; heme A from heme O: step 1/1. Catalyzes the conversion of heme O to heme A by two successive hydroxylations of the methyl group at C8. The first hydroxylation forms heme I, the second hydroxylation results in an unstable dihydroxymethyl group, which spontaneously dehydrates, resulting in the formyl group of heme A. The protein is Heme A synthase of Flavobacterium johnsoniae (strain ATCC 17061 / DSM 2064 / JCM 8514 / BCRC 14874 / CCUG 350202 / NBRC 14942 / NCIMB 11054 / UW101) (Cytophaga johnsonae).